We begin with the raw amino-acid sequence, 245 residues long: Carbohydrate deacetylase (245 aa).

2 residues coordinate Mg(2+): histidine 59 and histidine 125.

Belongs to the YdjC deacetylase family. In terms of assembly, homodimer. Mg(2+) serves as cofactor.

Functionally, probably catalyzes the deacetylation of acetylated carbohydrates an important step in the degradation of oligosaccharides. In Listeria monocytogenes serotype 4a (strain HCC23), this protein is Carbohydrate deacetylase.